The chain runs to 916 residues: Alanine--tRNA ligase (916 aa).

Zn(2+)-binding residues include His-611, His-615, Cys-714, and His-718.

This sequence belongs to the class-II aminoacyl-tRNA synthetase family. Requires Zn(2+) as cofactor.

It is found in the cytoplasm. It carries out the reaction tRNA(Ala) + L-alanine + ATP = L-alanyl-tRNA(Ala) + AMP + diphosphate. Catalyzes the attachment of alanine to tRNA(Ala) in a two-step reaction: alanine is first activated by ATP to form Ala-AMP and then transferred to the acceptor end of tRNA(Ala). Also edits incorrectly charged Ser-tRNA(Ala) and Gly-tRNA(Ala) via its editing domain. The protein is Alanine--tRNA ligase of Methanospirillum hungatei JF-1 (strain ATCC 27890 / DSM 864 / NBRC 100397 / JF-1).